Here is a 306-residue protein sequence, read N- to C-terminus: Ribonuclease Z (306 aa).

Residues histidine 63, histidine 65, aspartate 67, histidine 68, histidine 141, aspartate 211, and histidine 269 each contribute to the Zn(2+) site. Aspartate 67 functions as the Proton acceptor in the catalytic mechanism.

This sequence belongs to the RNase Z family. As to quaternary structure, homodimer. It depends on Zn(2+) as a cofactor.

The catalysed reaction is Endonucleolytic cleavage of RNA, removing extra 3' nucleotides from tRNA precursor, generating 3' termini of tRNAs. A 3'-hydroxy group is left at the tRNA terminus and a 5'-phosphoryl group is left at the trailer molecule.. Zinc phosphodiesterase, which displays some tRNA 3'-processing endonuclease activity. Probably involved in tRNA maturation, by removing a 3'-trailer from precursor tRNA. This is Ribonuclease Z from Macrococcus caseolyticus (strain JCSC5402) (Macrococcoides caseolyticum).